A 223-amino-acid chain; its full sequence is Small ribosomal subunit protein uS3 (223 aa).

The 69-residue stretch at 38–106 (LKAELKEKLK…EVYIDIQEVH (69 aa)) folds into the KH type-2 domain.

This sequence belongs to the universal ribosomal protein uS3 family. In terms of assembly, part of the 30S ribosomal subunit. Forms a tight complex with proteins S10 and S14.

Its function is as follows. Binds the lower part of the 30S subunit head. Binds mRNA in the 70S ribosome, positioning it for translation. This is Small ribosomal subunit protein uS3 from Koribacter versatilis (strain Ellin345).